The primary structure comprises 187 residues: Elongation factor P (187 aa).

It belongs to the elongation factor P family.

It localises to the cytoplasm. It participates in protein biosynthesis; polypeptide chain elongation. In terms of biological role, involved in peptide bond synthesis. Stimulates efficient translation and peptide-bond synthesis on native or reconstituted 70S ribosomes in vitro. Probably functions indirectly by altering the affinity of the ribosome for aminoacyl-tRNA, thus increasing their reactivity as acceptors for peptidyl transferase. This chain is Elongation factor P, found in Helicobacter acinonychis (strain Sheeba).